The following is a 299-amino-acid chain: Probable lipid kinase YegS (299 aa).

The 132-residue stretch at 2-133 folds into the DAGKc domain; sequence ANFPASLLIL…IDMARVNDKT (132 aa). ATP contacts are provided by residues Thr-40, 66–72, and Thr-95; that span reads GDGTINE. Mg(2+)-binding residues include Leu-215, Asp-218, and Leu-220. Glu-271 acts as the Proton acceptor in catalysis.

It belongs to the diacylglycerol/lipid kinase family. YegS lipid kinase subfamily. Mg(2+) is required as a cofactor. Requires Ca(2+) as cofactor.

The protein localises to the cytoplasm. Its function is as follows. Probably phosphorylates lipids; the in vivo substrate is unknown. This Salmonella paratyphi A (strain ATCC 9150 / SARB42) protein is Probable lipid kinase YegS.